A 342-amino-acid chain; its full sequence is Galactose mutarotase (342 aa).

Beta-D-galactose-binding positions include 81–82 (NR) and His-107. Ser-124 is modified (phosphoserine). His-176 acts as the Proton donor in catalysis. Beta-D-galactose contacts are provided by residues 176-178 (HSY), Asp-243, Gln-279, and Glu-307. Glu-307 functions as the Proton acceptor in the catalytic mechanism.

Belongs to the aldose epimerase family. As to quaternary structure, monomer.

It localises to the cytoplasm. The catalysed reaction is alpha-D-galactose = beta-D-galactose. It carries out the reaction alpha-D-glucose = beta-D-glucose. It participates in carbohydrate metabolism; hexose metabolism. It functions in the pathway carbohydrate metabolism; galactose metabolism. In terms of biological role, mutarotase that catalyzes the interconversion of beta-D-galactose and alpha-D-galactose during galactose metabolism. Beta-D-galactose is metabolized in the liver into glucose 1-phosphate, the primary metabolic fuel, by the action of four enzymes that constitute the Leloir pathway: GALM, GALK1 (galactokinase), GALT (galactose-1-phosphate uridylyltransferase) and GALE (UDP-galactose-4'-epimerase). Involved in the maintenance of the equilibrium between the beta- and alpha-anomers of galactose, therefore ensuring a sufficient supply of the alpha-anomer for GALK1. Also active on D-glucose although shows a preference for galactose over glucose. The sequence is that of Galactose mutarotase (GALM) from Bos taurus (Bovine).